Reading from the N-terminus, the 119-residue chain is UPF0231 protein ECA3777 (119 aa).

It belongs to the UPF0231 family.

The chain is UPF0231 protein ECA3777 from Pectobacterium atrosepticum (strain SCRI 1043 / ATCC BAA-672) (Erwinia carotovora subsp. atroseptica).